Reading from the N-terminus, the 1074-residue chain is Fibrous sheath CABYR-binding protein (1074 aa).

The segment at 1 to 73 (MEECEEPEEP…SKDNYSRKEY (73 aa)) is disordered. 4 positions are modified to phosphoserine: serine 25, serine 57, serine 186, and serine 275. Disordered regions lie at residues 272–294 (QAPSPAEETSAAETATTTAKDVV) and 317–343 (LVQGALSDKPSDQQYPQGTEMAPSELP). Residues 274-290 (PSPAEETSAAETATTTA) are compositionally biased toward low complexity. At serine 365 the chain carries Phosphoserine. Disordered regions lie at residues 437 to 789 (VSAD…PLES) and 818 to 982 (GVPA…PLKT). A compositionally biased stretch (low complexity) spans 448 to 467 (PPSAEDASEEVASSEVLPPS). Residues 528-544 (VLPPPAEEAPAEVPPPL) are compositionally biased toward pro residues. A compositionally biased stretch (low complexity) spans 558–575 (EEGPAEVPLAPAEEVPAE). 2 stretches are compositionally biased toward pro residues: residues 576-592 (FLPPPAEEVPAEVPPPL) and 673-688 (PLPPTAERPEEAPPPA). The segment covering 689-720 (TEEAPVEVLPPATEEAPVEVLPPATEEAPVEV) has biased composition (low complexity). Serine 1020 carries the post-translational modification Phosphoserine. Residues 1026–1054 (SEKELESTTLTSDKMSEGIDSVPEDVSGT) form a disordered region.

As to quaternary structure, interacts with CABYR. Interacts with ROPN1 and ROPN1L; the interaction increases upon spermatozoa capacitation conditions. Phosphorylated by PKA upon spermatozoa capacitation conditions. Expression is restricted to testis and epididymis, expressed by spermatozoa.

It is found in the cell projection. The protein resides in the cilium. Its subcellular location is the flagellum. Functionally, may be involved in the later stages of fibrous sheath biogenesis and spermatozoa capacitation. Inhibits ROPN1 and ROPN1L SUMOylation. Binds calcium. The protein is Fibrous sheath CABYR-binding protein of Mus musculus (Mouse).